Here is a 425-residue protein sequence, read N- to C-terminus: F-box/LRR-repeat protein At3g59250 (425 aa).

The F-box domain occupies 6 to 54 (KDKISNLPEALICHILSFLPIEDSALTSVLSKRWRYLFAFRPNLVFDDS). LRR repeat units lie at residues 86-113 (DLQVNVNGVRLPSKVFVSKSLVRLRIES), 138-163 (MLGKGEDCFEKLTSGCHVLEELVLNN), 185-210 (CTESYDKNPHSVLFDTPNLVYLKYSD), 264-293 (CLSANSLAVLTFCCESIPVFNNLIQLTIKT), and 294-319 (NQSVGWESLPALLKNCPILETLVFEG).

The sequence is that of F-box/LRR-repeat protein At3g59250 from Arabidopsis thaliana (Mouse-ear cress).